A 351-amino-acid polypeptide reads, in one-letter code: Photosystem II D2 protein 2 (351 aa).

Residues 39–59 form a helical membrane-spanning segment; it reads CAFLSIGGWFTGTTFVTSWYT. Chlorophyll a is bound at residue H116. The chain crosses the membrane as a helical span at residues 123-139; the sequence is GFMLRQFEIARLVNVRP. Positions 128 and 141 each coordinate pheophytin a. The helical transmembrane segment at 151-164 threads the bilayer; sequence VFVSVFLMYPLGQS. H196 provides a ligand contact to chlorophyll a. Residues 206–226 traverse the membrane as a helical segment; that stretch reads GALLCAIHGATVENTLFEDTK. H213 and F260 together coordinate a plastoquinone. H213 lines the Fe cation pocket. H267 provides a ligand contact to Fe cation. Residues 277-293 traverse the membrane as a helical segment; sequence GLWASAIGLVGIALNMR.

The protein belongs to the reaction center PufL/M/PsbA/D family. As to quaternary structure, PSII is composed of 1 copy each of membrane proteins PsbA, PsbB, PsbC, PsbD, PsbE, PsbF, PsbH, PsbI, PsbJ, PsbK, PsbL, PsbM, PsbT, PsbX, PsbY, PsbZ, Psb30/Ycf12, peripheral proteins PsbO, CyanoQ (PsbQ), PsbU, PsbV and a large number of cofactors. It forms dimeric complexes. The cofactor is The D1/D2 heterodimer binds P680, chlorophylls that are the primary electron donor of PSII, and subsequent electron acceptors. It shares a non-heme iron and each subunit binds pheophytin, quinone, additional chlorophylls, carotenoids and lipids. There is also a Cl(-1) ion associated with D1 and D2, which is required for oxygen evolution. The PSII complex binds additional chlorophylls, carotenoids and specific lipids..

It localises to the cellular thylakoid membrane. It carries out the reaction 2 a plastoquinone + 4 hnu + 2 H2O = 2 a plastoquinol + O2. In terms of biological role, photosystem II (PSII) is a light-driven water:plastoquinone oxidoreductase that uses light energy to abstract electrons from H(2)O, generating O(2) and a proton gradient subsequently used for ATP formation. It consists of a core antenna complex that captures photons, and an electron transfer chain that converts photonic excitation into a charge separation. The D1/D2 (PsbA/PsbD) reaction center heterodimer binds P680, the primary electron donor of PSII as well as several subsequent electron acceptors. D2 is needed for assembly of a stable PSII complex. The sequence is that of Photosystem II D2 protein 2 from Acaryochloris marina (strain MBIC 11017).